The sequence spans 292 residues: Elongation factor Ts (292 aa).

An involved in Mg(2+) ion dislocation from EF-Tu region spans residues 80–83; it reads TDFV.

Belongs to the EF-Ts family.

The protein localises to the cytoplasm. In terms of biological role, associates with the EF-Tu.GDP complex and induces the exchange of GDP to GTP. It remains bound to the aminoacyl-tRNA.EF-Tu.GTP complex up to the GTP hydrolysis stage on the ribosome. The chain is Elongation factor Ts from Psychrobacter sp. (strain PRwf-1).